Reading from the N-terminus, the 730-residue chain is Actin filament-associated protein 1 (730 aa).

The residue at position 1 (M1) is an N-acetylmethionine. Positions 47–91 (KDHAQKQETANSLPAPPQMPLPEIPQPWLPPDSGPPPLPTSSLPE) are disordered. The span at 60-85 (PAPPQMPLPEIPQPWLPPDSGPPPLP) shows a compositional bias: pro residues. The SH3-binding signature appears at 71–74 (PQPW). Positions 94-97 (YEEA) match the SH2-binding 1 motif. The disordered stretch occupies residues 119–140 (SSSYESYDEEEEDGKGKKTRHQ). Residues 153 to 249 (DAKICAFLLR…WLKVIKEAYS (97 aa)) form the PH 1 domain. The disordered stretch occupies residues 252 to 292 (SGPVDSECPPPPSSPVHKAELEKKLSSERPSSDGEGVVENG). Over residues 268–283 (HKAELEKKLSSERPSS) the composition is skewed to basic and acidic residues. Phosphoserine occurs at positions 282 and 283. One can recognise a PH 2 domain in the interval 347–441 (DVPTCGYLNV…WIGILLAETG (95 aa)). The SH2-binding 2 signature appears at 451–456 (YDYIDV). The disordered stretch occupies residues 512–537 (KGKKPPVASNGVTGKGKTLSSQPKKA). The residue at position 548 (S548) is a Phosphoserine. A coiled-coil region spans residues 557-648 (KNRVEADAKR…VKESLKKALA (92 aa)). The segment at 594 to 637 (DLRAAIEVNAGRKPQAILEEKLKQLEEECRQKEAERVSLELELT) is interaction with F-actin. Phosphoserine occurs at positions 664, 665, and 668. At T675 the chain carries Phosphothreonine. S679 and S687 each carry phosphoserine.

As to quaternary structure, monomer and homomultimer. Interacts via its C-terminus with F-actin; probably involving AFAP1 multimers. Interacts with activated SRC SH3-SH2 domains. Interacts via its PH 1 domain with PRKCA, PRKCB and PRKCI. In terms of processing, phosphorylated on tyrosine residues by SRC. Low expression in normal breast epithelial cell line MCF-10A and in tumorigenic breast cancer cell lines MCF-7, T-47D and ZR-75-1. Highly expressed in the invasive breast cancer cell lines MDA-MB-231 and MDA-MB-435. Overexpressed in prostate carcinoma.

It localises to the cytoplasm. Its subcellular location is the cytoskeleton. It is found in the stress fiber. Can cross-link actin filaments into both network and bundle structures. May modulate changes in actin filament integrity and induce lamellipodia formation. May function as an adapter molecule that links other proteins, such as SRC and PKC to the actin cytoskeleton. Seems to play a role in the development and progression of prostate adenocarcinoma by regulating cell-matrix adhesions and migration in the cancer cells. This is Actin filament-associated protein 1 (AFAP1) from Homo sapiens (Human).